Consider the following 420-residue polypeptide: Gamma-glutamyl phosphate reductase (420 aa).

The protein belongs to the gamma-glutamyl phosphate reductase family.

It localises to the cytoplasm. It catalyses the reaction L-glutamate 5-semialdehyde + phosphate + NADP(+) = L-glutamyl 5-phosphate + NADPH + H(+). It functions in the pathway amino-acid biosynthesis; L-proline biosynthesis; L-glutamate 5-semialdehyde from L-glutamate: step 2/2. Functionally, catalyzes the NADPH-dependent reduction of L-glutamate 5-phosphate into L-glutamate 5-semialdehyde and phosphate. The product spontaneously undergoes cyclization to form 1-pyrroline-5-carboxylate. This Streptococcus pneumoniae (strain JJA) protein is Gamma-glutamyl phosphate reductase.